Reading from the N-terminus, the 890-residue chain is Nucleoside hydrolase 3 (890 aa).

The N-terminal stretch at 1 to 21 is a signal peptide; sequence MLTSPTLKSLWFLFTILGLLG. 7 N-linked (GlcNAc...) asparagine glycosylation sites follow: Asn55, Asn232, Asn371, Asn485, Asn580, Asn655, and Asn740.

The protein belongs to the IUNH family.

It is found in the secreted. Its subcellular location is the extracellular space. The protein resides in the apoplast. It catalyses the reaction a purine D-ribonucleoside + H2O = a purine nucleobase + D-ribose. It carries out the reaction inosine + H2O = hypoxanthine + D-ribose. The catalysed reaction is adenosine + H2O = D-ribose + adenine. In terms of biological role, extracellular purine-specific hydrolase present in the apoplastic fluid involved in the degradation of extracellular nucleosides, including inosine and adenosine, and which may participate in wound and pathogen responses (e.g. Botrytis cinerea). In Arabidopsis thaliana (Mouse-ear cress), this protein is Nucleoside hydrolase 3.